Reading from the N-terminus, the 457-residue chain is Argininosuccinate lyase (457 aa).

This sequence belongs to the lyase 1 family. Argininosuccinate lyase subfamily.

It is found in the cytoplasm. The catalysed reaction is 2-(N(omega)-L-arginino)succinate = fumarate + L-arginine. It functions in the pathway amino-acid biosynthesis; L-arginine biosynthesis; L-arginine from L-ornithine and carbamoyl phosphate: step 3/3. The polypeptide is Argininosuccinate lyase (Pasteurella multocida (strain Pm70)).